The primary structure comprises 379 residues: Eukaryotic translation initiation factor 3 subunit M (379 aa).

One can recognise a PCI domain in the interval 179–341 (RSEEASKVMI…RKVIISSVAQ (163 aa)).

It belongs to the eIF-3 subunit M family. As to quaternary structure, component of the eukaryotic translation initiation factor 3 (eIF-3) complex.

The protein resides in the cytoplasm. Functionally, component of the eukaryotic translation initiation factor 3 (eIF-3) complex, which is involved in protein synthesis of a specialized repertoire of mRNAs and, together with other initiation factors, stimulates binding of mRNA and methionyl-tRNAi to the 40S ribosome. The eIF-3 complex specifically targets and initiates translation of a subset of mRNAs involved in cell proliferation. The sequence is that of Eukaryotic translation initiation factor 3 subunit M from Nematostella vectensis (Starlet sea anemone).